Reading from the N-terminus, the 188-residue chain is Protein ORFV073 (188 aa).

As to quaternary structure, interacts with host IKBKG; this interaction inhibits host NF-kappa-B pathway activation.

The protein resides in the host nucleus. The protein localises to the host cytoplasm. It is found in the host perinuclear region. Its subcellular location is the virion. Its function is as follows. Plays a role in the inhibition of the host NF-kappa-B pathway early during infection. Prevents the host RELA subunit from reaching the nucleus and activate transcription. The chain is Protein ORFV073 from Capra hircus (Goat).